A 546-amino-acid polypeptide reads, in one-letter code: Smad protein daf-8 (546 aa).

Residues 16 to 137 (AMAQKVLEET…YRWVELPTCQ (122 aa)) enclose the MH1 domain. Disordered regions lie at residues 234–268 (LQQS…FIPN) and 292–317 (ENFS…PIEP). The span at 292 to 302 (ENFSSENNGNR) shows a compositional bias: polar residues. The region spanning 349 to 546 (WLKLIYYEEG…APPRICSSRT (198 aa)) is the MH2 domain.

The protein belongs to the dwarfin/SMAD family. Homodimer. Interacts with R-SMAD daf-14 and co-SMAD daf-3. Interacts with orphan nuclear receptor nhr-69. As to expression, expressed in the excretory cell and gonadal distal tip cells (DTCs).

It is found in the cytoplasm. It localises to the nucleus. Probably a receptor-regulated SMAD (R-SMAD) that is an intracellular signal transducer and transcriptional modulator activated by TGF-beta-like daf-7 signaling. Plays a role in TGF-beta-like daf-7 signaling in regulating entry into a developmentally arrested larval state known as dauer, in response to harsh environmental conditions; partially redundant with R-SMAD daf-14. Plays a role in inhibiting mitosis and promoting a switch to meiosis in the germ line, perhaps by down-regulating lag-2 transcription in the gonadal distal tip cells (DTCs). In cooperation with orphan nuclear receptor nhr-69 modulates the Insulin/IGF-1-like signaling (IIS) pathway, perhaps by regulating expression of the potassium channel exp-2, which in turn modulates the secretion of the insulin-like peptide daf-28. This chain is Smad protein daf-8, found in Caenorhabditis elegans.